A 446-amino-acid chain; its full sequence is Tubulin gamma chain (446 aa).

142-148 (AGGTGSG) serves as a coordination point for GTP.

It belongs to the tubulin family.

The protein localises to the cytoplasm. It localises to the cytoskeleton. Its subcellular location is the microtubule organizing center. It is found in the spindle pole body. In terms of biological role, tubulin is the major constituent of microtubules. The gamma chain is found at microtubule organizing centers (MTOC) such as the spindle poles or the centrosome, suggesting that it is involved in the minus-end nucleation of microtubule assembly. The polypeptide is Tubulin gamma chain (tug1) (Schizosaccharomyces japonicus (Fission yeast)).